The sequence spans 240 residues: Uridylate kinase (240 aa).

14–17 contributes to the ATP binding site; the sequence is KLSG. Gly-56 is a UMP binding site. ATP-binding residues include Gly-57 and Arg-61. Residues Asp-76 and 137-144 each bind UMP; that span reads TGNPFFTT. Residues Thr-164, Tyr-170, and Asp-173 each coordinate ATP.

Belongs to the UMP kinase family. In terms of assembly, homohexamer.

The protein resides in the cytoplasm. The catalysed reaction is UMP + ATP = UDP + ADP. Its pathway is pyrimidine metabolism; CTP biosynthesis via de novo pathway; UDP from UMP (UMPK route): step 1/1. Its activity is regulated as follows. Inhibited by UTP. Its function is as follows. Catalyzes the reversible phosphorylation of UMP to UDP. The protein is Uridylate kinase of Acidovorax sp. (strain JS42).